The primary structure comprises 209 residues: Orotate phosphoribosyltransferase (209 aa).

5-phospho-alpha-D-ribose 1-diphosphate contacts are provided by residues Arg-96, Lys-100, His-102, and Glu-122 to Ser-130. Ser-126 lines the orotate pocket.

This sequence belongs to the purine/pyrimidine phosphoribosyltransferase family. PyrE subfamily. In terms of assembly, homodimer. It depends on Mg(2+) as a cofactor.

It carries out the reaction orotidine 5'-phosphate + diphosphate = orotate + 5-phospho-alpha-D-ribose 1-diphosphate. It participates in pyrimidine metabolism; UMP biosynthesis via de novo pathway; UMP from orotate: step 1/2. Its function is as follows. Catalyzes the transfer of a ribosyl phosphate group from 5-phosphoribose 1-diphosphate to orotate, leading to the formation of orotidine monophosphate (OMP). The protein is Orotate phosphoribosyltransferase of Streptococcus gordonii (strain Challis / ATCC 35105 / BCRC 15272 / CH1 / DL1 / V288).